The following is a 502-amino-acid chain: Galactose/methyl galactoside import ATP-binding protein MglA (502 aa).

ABC transporter domains are found at residues 10 to 245 and 255 to 502; these read LEMT…VGRE and NTPK…SRYL. Position 42–49 (42–49) interacts with ATP; that stretch reads GENGAGKS.

Belongs to the ABC transporter superfamily. Galactose/methyl galactoside importer (TC 3.A.1.2.3) family. The complex is composed of one ATP-binding protein (MglA), two transmembrane proteins (MglC) and a solute-binding protein (MglB).

The protein resides in the cell inner membrane. It carries out the reaction D-galactose(out) + ATP + H2O = D-galactose(in) + ADP + phosphate + H(+). The catalysed reaction is methyl beta-D-galactoside(out) + ATP + H2O = methyl beta-D-galactoside(in) + ADP + phosphate + H(+). Its function is as follows. Part of the ABC transporter complex MglABC involved in galactose/methyl galactoside import. Responsible for energy coupling to the transport system. The chain is Galactose/methyl galactoside import ATP-binding protein MglA from Vibrio vulnificus (strain CMCP6).